A 1168-amino-acid chain; its full sequence is Myosin IC heavy chain (1168 aa).

A Myosin motor domain is found at 7–666; the sequence is HGVDDMVMLT…SVFSLEELRD (660 aa). An ATP-binding site is contributed by 101–108; sequence GESGAGKT. Ser311 is subject to Phosphoserine. The actin-binding stretch occupies residues 542-564; that stretch reads INILVATLSKCTPHYIRCIKPNE. The TH1 domain occupies 704–892; it reads KERRRLSLER…KVSVAPGLPP (189 aa). Disordered regions lie at residues 876-909, 921-978, and 1036-1168; these read DGKV…GGAS, ILGA…APGP, and AAAP…PPGM. Residues 895–909 are compositionally biased toward polar residues; sequence APNIQAPQETSGGAS. Gly residues-rich tracts occupy residues 924–939 and 950–959; these read AKGG…GGPS and PGGGGGGPSP. Positions 960 to 978 are enriched in low complexity; that stretch reads FGGRPSPSGPPAAASAPGP. An SH3 domain is found at 976–1035; it reads PGPEQARALYDFAAENPDELTFNEGAVVTVINKSNPDWWEGELNGQRGVFPASYVELIPR. The segment covering 1040–1052 has biased composition (pro residues); that stretch reads APGPSGGPRPAPP. 2 stretches are compositionally biased toward gly residues: residues 1063–1083 and 1090–1099; these read GGPG…GRGG and GRAGPPGGRG. The span at 1100–1112 shows a compositional bias: low complexity; sequence MPAPGGAAPRGRG. The span at 1120–1141 shows a compositional bias: gly residues; that stretch reads GPPGGGRGGAPPPGGMRGRGGP. A compositionally biased stretch (low complexity) spans 1152–1161; it reads GGMMPPRGRA.

It belongs to the TRAFAC class myosin-kinesin ATPase superfamily. Myosin family. As to quaternary structure, myosin I heavy chain is single-headed. Dimer of a heavy and a light chain. Inability to self-assemble into filaments.

Myosin is a protein that binds to F-actin and has ATPase activity that is activated by F-actin. In Acanthamoeba castellanii (Amoeba), this protein is Myosin IC heavy chain (MIC).